The sequence spans 338 residues: MNLQRFPRYPLTFGPTPIQPLKRLSDHLGGKVHLYAKREDCNSGFAFGGNKTRKLEYLIPEALAQGCDTLVSIGGIQSNQTRQVAAVAAHLGMKCVLVQENWVNYSDAVYDRVGNIQMSRILGADVRLVADGFDIGFRKSWEDALESVRAAGGKPYAIPAGCSDHPLGGLGFVGFAEEVRQQEAELGFKFDYIVVCSVTGSTQAGMVVGFADDGRAERVIGIDASAKPAQTREQITRIAKQTAEQVGLGRDITSKDVVLDERFGGPEYGLPNDGTLEAIRLCARLEGVLTDPVYEGKSMHGMIEMVRNGEFPEGSRVLYAHLGGVPALNGYSFIFRNG.

At lysine 51 the chain carries N6-(pyridoxal phosphate)lysine. Residue serine 78 is the Nucleophile of the active site.

It belongs to the ACC deaminase/D-cysteine desulfhydrase family. Homotrimer. The cofactor is pyridoxal 5'-phosphate.

It carries out the reaction 1-aminocyclopropane-1-carboxylate + H2O = 2-oxobutanoate + NH4(+). Functionally, catalyzes a cyclopropane ring-opening reaction, the irreversible conversion of 1-aminocyclopropane-1-carboxylate (ACC) to ammonia and alpha-ketobutyrate. Allows growth on ACC as a nitrogen source. This is 1-aminocyclopropane-1-carboxylate deaminase from Paraburkholderia phytofirmans (strain DSM 17436 / LMG 22146 / PsJN) (Burkholderia phytofirmans).